A 480-amino-acid polypeptide reads, in one-letter code: Cytochrome b-c1 complex subunit 1, mitochondrial (480 aa).

A mitochondrion-targeting transit peptide spans 1 to 34 (MAASAVCRAACSGTQVLLRTRRSPALLRLPALRG). Lys111 and Lys138 each carry N6-acetyllysine. Lys163 is subject to N6-acetyllysine; alternate. Lys163 carries the post-translational modification N6-succinyllysine; alternate. Ser212 carries the post-translational modification Phosphoserine. Thr214 is subject to Phosphothreonine. Lys248 carries the post-translational modification N6-acetyllysine.

This sequence belongs to the peptidase M16 family. UQCRC1/QCR1 subfamily. Component of the ubiquinol-cytochrome c oxidoreductase (cytochrome b-c1 complex, complex III, CIII), a multisubunit enzyme composed of 11 subunits. The complex is composed of 3 respiratory subunits cytochrome b, cytochrome c1 and Rieske protein UQCRFS1, 2 core protein subunits UQCRC1/QCR1 and UQCRC2/QCR2, and 6 low-molecular weight protein subunits UQCRH/QCR6, UQCRB/QCR7, UQCRQ/QCR8, UQCR10/QCR9, UQCR11/QCR10 and subunit 9, the cleavage product of Rieske protein UQCRFS1. The complex exists as an obligatory dimer and forms supercomplexes (SCs) in the inner mitochondrial membrane with NADH-ubiquinone oxidoreductase (complex I, CI) and cytochrome c oxidase (complex IV, CIV), resulting in different assemblies (supercomplex SCI(1)III(2)IV(1) and megacomplex MCI(2)III(2)IV(2)). Interacts with UQCC6. Interacts with STMP1. Acetylation of Lys-138 is observed in liver mitochondria from fasted mice but not from fed mice. Expressed in neurons and astrocytes of the cerebral cortex and hippocampus (at protein level).

It is found in the mitochondrion inner membrane. In terms of biological role, component of the ubiquinol-cytochrome c oxidoreductase, a multisubunit transmembrane complex that is part of the mitochondrial electron transport chain which drives oxidative phosphorylation. The respiratory chain contains 3 multisubunit complexes succinate dehydrogenase (complex II, CII), ubiquinol-cytochrome c oxidoreductase (cytochrome b-c1 complex, complex III, CIII) and cytochrome c oxidase (complex IV, CIV), that cooperate to transfer electrons derived from NADH and succinate to molecular oxygen, creating an electrochemical gradient over the inner membrane that drives transmembrane transport and the ATP synthase. The cytochrome b-c1 complex catalyzes electron transfer from ubiquinol to cytochrome c, linking this redox reaction to translocation of protons across the mitochondrial inner membrane, with protons being carried across the membrane as hydrogens on the quinol. In the process called Q cycle, 2 protons are consumed from the matrix, 4 protons are released into the intermembrane space and 2 electrons are passed to cytochrome c. The 2 core subunits UQCRC1/QCR1 and UQCRC2/QCR2 are homologous to the 2 mitochondrial-processing peptidase (MPP) subunits beta-MPP and alpha-MPP respectively, and they seem to have preserved their MPP processing properties. May be involved in the in situ processing of UQCRFS1 into the mature Rieske protein and its mitochondrial targeting sequence (MTS)/subunit 9 when incorporated into complex III. Seems to play an important role in the maintenance of proper mitochondrial function in nigral dopaminergic neurons. In Mus musculus (Mouse), this protein is Cytochrome b-c1 complex subunit 1, mitochondrial (Uqcrc1).